We begin with the raw amino-acid sequence, 513 residues long: MSDDNRVYIFDTTLRDGEQSPGATMTREEKVRMARQLETLGVDIIEAGFPAASEGDFQAVSAIAAAVKTPVVAALCRALASDIDRGFEAIKGAQRRRIHTFLATSELHMQHKLNKTPTQVLDMIEAAVSHAASKGVEVQFSAEDASRSEPAFLVAACERAINAGATILNIPDTVGYAQPAEFAELIRHLMTTVRGAGGVTFAVHCHNDLGLAVANTLAALHAGARQAEVTLSGIGERAGNASLEQVVMGLNTRPNYYNLTTGIVTEELFPSCRRLSGIIGQPIPPYAPIMGRNAFAHESGIHQHGVLKDRRTYEIMTAESIGRKGAVVVLGKHSGRHALDAKVKELGYALNDEELLVVFVAVKQLADRKQRILDEDIEALILEKVLRRPDRYALQFLSVHCGNVELAPFAVVEMQVEGQTVRHYSAGSGPVDAVFNAVCQAVGRKPDLEEYQINAITGGTDAQGEVTVRIKDGTATTVGRGVHDDVIMASTLAFINALNRLAKKEEERTCPQL.

The Pyruvate carboxyltransferase domain occupies 7 to 269; that stretch reads VYIFDTTLRD…TTGIVTEELF (263 aa). Mn(2+) is bound by residues D16, H204, H206, and N240. The regulatory domain stretch occupies residues 393–513; the sequence is ALQFLSVHCG…KEEERTCPQL (121 aa).

This sequence belongs to the alpha-IPM synthase/homocitrate synthase family. LeuA type 1 subfamily. In terms of assembly, homodimer. The cofactor is Mn(2+).

The protein resides in the cytoplasm. The catalysed reaction is 3-methyl-2-oxobutanoate + acetyl-CoA + H2O = (2S)-2-isopropylmalate + CoA + H(+). The protein operates within amino-acid biosynthesis; L-leucine biosynthesis; L-leucine from 3-methyl-2-oxobutanoate: step 1/4. Its function is as follows. Catalyzes the condensation of the acetyl group of acetyl-CoA with 3-methyl-2-oxobutanoate (2-ketoisovalerate) to form 3-carboxy-3-hydroxy-4-methylpentanoate (2-isopropylmalate). The polypeptide is 2-isopropylmalate synthase (Solidesulfovibrio magneticus (strain ATCC 700980 / DSM 13731 / RS-1) (Desulfovibrio magneticus)).